We begin with the raw amino-acid sequence, 21 residues long: Formate ester dehydrogenase beta chain (21 aa).

Heterotrimer composed of an alpha, a beta and a gamma chain.

The protein is Formate ester dehydrogenase beta chain of Amycolatopsis methanolica.